A 43-amino-acid chain; its full sequence is Structural protein ORF5a (43 aa).

Residues 2–22 form a helical membrane-spanning segment; that stretch reads FSQIGAFLDSALLLLVAFFAV.

Belongs to the arteriviridae ORF5a protein family. In terms of assembly, interacts with proteins GP2B and GP4.

The protein localises to the virion. The protein resides in the host cell membrane. Its function is as follows. Minor virion component that plays an essential role in virus infectivity. This is Structural protein ORF5a from Sus scrofa (Pig).